A 244-amino-acid chain; its full sequence is tRNA pseudouridine synthase A (244 aa).

Asp52 acts as the Nucleophile in catalysis. Position 110 (Tyr110) interacts with substrate.

It belongs to the tRNA pseudouridine synthase TruA family. As to quaternary structure, homodimer.

The enzyme catalyses uridine(38/39/40) in tRNA = pseudouridine(38/39/40) in tRNA. In terms of biological role, formation of pseudouridine at positions 38, 39 and 40 in the anticodon stem and loop of transfer RNAs. This Geobacter sulfurreducens (strain ATCC 51573 / DSM 12127 / PCA) protein is tRNA pseudouridine synthase A.